We begin with the raw amino-acid sequence, 504 residues long: Porphyrin biosynthesis protein HemD (504 aa).

Positions 1 to 248 (MEHGFVALVG…LSEKFSWFMK (248 aa)) are uroporphyrinogen-III C-methyltransferase. The uroporphyrinogen-III synthase stretch occupies residues 249–504 (KPLFGTKILV…LEIGGGNIYD (256 aa)).

The protein in the N-terminal section; belongs to the precorrin methyltransferase family. It in the C-terminal section; belongs to the uroporphyrinogen-III synthase family.

The catalysed reaction is uroporphyrinogen III + 2 S-adenosyl-L-methionine = precorrin-2 + 2 S-adenosyl-L-homocysteine + H(+). It carries out the reaction hydroxymethylbilane = uroporphyrinogen III + H2O. It participates in cofactor biosynthesis; adenosylcobalamin biosynthesis; precorrin-2 from uroporphyrinogen III: step 1/1. It functions in the pathway porphyrin-containing compound metabolism; siroheme biosynthesis; precorrin-2 from uroporphyrinogen III: step 1/1. Functionally, may catalyze sequential reactions to synthesize uroporphyrinogen III from hydroxymethylbilane (HMB) and then precorrin-2, which are intermediate compounds in both vitamin B12 and siroheme biosyntheses. This is Porphyrin biosynthesis protein HemD (hemD) from Ruminiclostridium josui (Clostridium josui).